A 146-amino-acid chain; its full sequence is Hemoglobin subunit beta-1 (146 aa).

A Globin domain is found at 2–146 (EWSSNERSTI…VISALSRQYF (145 aa)). H63 and H92 together coordinate heme b.

It belongs to the globin family. As to quaternary structure, heterotetramer of two alpha chains and two beta chains. Red blood cells.

In terms of biological role, involved in oxygen transport from gills to the various peripheral tissues. This is Hemoglobin subunit beta-1 (hbb1) from Muraena helena (Mediterranean moray).